The primary structure comprises 173 residues: Disulfide bond formation protein B (173 aa).

The Cytoplasmic segment spans residues 1-14 (MIEFLRRIAAHRLA). A helical transmembrane segment spans residues 15 to 31 (WGLLAASALFLELSALF). Over 32 to 49 (FQYVLGLHPCVMCVYERL) the chain is Periplasmic. The cysteines at positions 41 and 44 are disulfide-linked. The chain crosses the membrane as a helical span at residues 50–65 (AILGVLSAGLLGMVAP). Over 66-72 (EKWYLRW) the chain is Cytoplasmic. A helical membrane pass occupies residues 73-90 (SALLLWGYSAFRGLQLAL). Over 91 to 145 (KHVDYQMNPSPFNVCSPFADFPSWAPLDQWLPWLFFPDGDCSEISWQFLSFSMPQ) the chain is Periplasmic. Cys-105 and Cys-131 are joined by a disulfide. The helical transmembrane segment at 146–164 (WLVAIFAAYLLVFVVVTIG) threads the bilayer. Over 165-173 (NLVKGRCCS) the chain is Cytoplasmic.

The protein belongs to the DsbB family.

It is found in the cell inner membrane. Required for disulfide bond formation in some periplasmic proteins. Acts by oxidizing the DsbA protein. The sequence is that of Disulfide bond formation protein B from Aeromonas salmonicida (strain A449).